Consider the following 64-residue polypeptide: Long neurotoxin MS4 (64 aa).

5 disulfides stabilise this stretch: C3/C24, C6/C11, C17/C41, C45/C57, and C58/C63.

It belongs to the three-finger toxin family. Ancestral subfamily. As to expression, expressed by the venom gland.

It is found in the secreted. Functionally, produces peripheral paralysis by blocking neuromuscular transmission at the postsynaptic site. Weak inhibitor of the endogenous nicotinic acetylcholine receptors (nAChR) in the human rhabdomyosarcoma TE 671 cell line with an IC(50) of 690 mM. This neurotoxin is lethal to zebrafish by injection at the back of the dorsolateral region, but is not toxic to mice by intraperitoneal injection. In Micrurus surinamensis (Surinam coral snake), this protein is Long neurotoxin MS4.